The following is a 30-amino-acid chain: Nattererin-1 (30 aa).

Expressed by the skin glands.

The protein resides in the secreted. Functionally, probably has antibacterial activity. This Physalaemus nattereri (Cuyaba dwarf frog) protein is Nattererin-1.